A 270-amino-acid polypeptide reads, in one-letter code: Putative carbamate hydrolase RutD (270 aa).

It belongs to the AB hydrolase superfamily. Hydrolase RutD family.

The enzyme catalyses carbamate + 2 H(+) = NH4(+) + CO2. Functionally, involved in pyrimidine catabolism. May facilitate the hydrolysis of carbamate, a reaction that can also occur spontaneously. The polypeptide is Putative carbamate hydrolase RutD (Escherichia coli (strain SMS-3-5 / SECEC)).